We begin with the raw amino-acid sequence, 488 residues long: MAETSLLEAGASAASTAAALENLQVEASCSVCLEYLKEPVIIECGHNFCKACITRWWEDLERDFPCPVCRKTSRYRSLRPNRQLGSMVEIAKQLQTVKRKIRDESLCSQHHEPLSLFCYEDQEAVCLICAISHTHRAHTVVPMDDATQEYKEKLQKCLEPLEQKLQEITCCKASEERKPGELKRLVESRRQQILKEFEELHRRLDEEQQTLLSRLEEEEQDILQRLRENAAHLGDRRRDLAHLAAEVEGKCLQSGFEMLKDVKSTLEKCEKVKTMEVTSVSIELEKNFSHFPRQYFALRKILKQLIADVTLDPETAHPNLVLSEDRKSVKFVETRLRDLPDTPQRFTFYPCVLATEGFTSGRHYWEVEVGDKTHWAVGVCRDSVSRKGELTPLPETGYWRVRLWNGDKYAATTTPFTPLHIKVKPKRVGIFLDYEAGTLSFYNVTDRSHIYTFTDTFTEKLWPLFYPGIRAGRKNAAPLTIRPPTDWE.

The segment at cysteine 29–arginine 70 adopts an RING-type zinc-finger fold. The segment at arginine 102–methionine 143 adopts a B box-type zinc-finger fold. 4 residues coordinate Zn(2+): cysteine 107, histidine 110, cysteine 129, and histidine 135. A coiled-coil region spans residues glutamate 181–lysine 250. Interaction with CDKN1A stretches follow at residues lysine 268–alanine 307 and threonine 359–glutamate 488. The 196-residue stretch at serine 289–proline 484 folds into the B30.2/SPRY domain.

This sequence belongs to the TRIM/RBCC family. As to quaternary structure, interacts with MOAP1. Interacts with CDKN1A. In terms of processing, autoubiquitinated.

Its subcellular location is the cytoplasm. It is found in the cytosol. The protein localises to the mitochondrion. The protein resides in the nucleus. The catalysed reaction is S-ubiquitinyl-[E2 ubiquitin-conjugating enzyme]-L-cysteine + [acceptor protein]-L-lysine = [E2 ubiquitin-conjugating enzyme]-L-cysteine + N(6)-ubiquitinyl-[acceptor protein]-L-lysine.. It functions in the pathway protein modification; protein ubiquitination. Functionally, E3 ubiquitin-protein ligase. May facilitate apoptosis by inhibiting APC/C-Cdh1-mediated poly-ubiquitination and subsequent proteasome-mediated degradation of the pro-apoptotic protein MOAP1. Regulates the G1/S transition of the cell cycle and DNA damage-induced G2 arrest by stabilizing CDKN1A/p21. Positively regulates CDKN1A/p21 stability by competing with DTL for CDKN1A/p21 binding, therefore disrupting DCX(DTL) E3 ubiquitin ligase complex-mediated CDKN1A/p21 ubiquitination and degradation. The sequence is that of E3 ubiquitin-protein ligase TRIM39 (Trim39) from Rattus norvegicus (Rat).